The following is a 364-amino-acid chain: 3-isopropylmalate dehydrogenase (364 aa).

77–90 (GPKWDNLPTDKRPE) is a binding site for NAD(+). Residues Arg97, Arg107, Arg135, and Asp224 each contribute to the substrate site. Mg(2+)-binding residues include Asp224, Asp248, and Asp252. 281 to 293 (GSAPDIAGKGIAN) serves as a coordination point for NAD(+).

This sequence belongs to the isocitrate and isopropylmalate dehydrogenases family. LeuB type 1 subfamily. Homodimer. Requires Mg(2+) as cofactor. Mn(2+) is required as a cofactor.

It localises to the cytoplasm. It carries out the reaction (2R,3S)-3-isopropylmalate + NAD(+) = 4-methyl-2-oxopentanoate + CO2 + NADH. It participates in amino-acid biosynthesis; L-leucine biosynthesis; L-leucine from 3-methyl-2-oxobutanoate: step 3/4. Its function is as follows. Catalyzes the oxidation of 3-carboxy-2-hydroxy-4-methylpentanoate (3-isopropylmalate) to 3-carboxy-4-methyl-2-oxopentanoate. The product decarboxylates to 4-methyl-2 oxopentanoate. The polypeptide is 3-isopropylmalate dehydrogenase (leuB) (Aquifex aeolicus (strain VF5)).